The primary structure comprises 488 residues: N-succinylglutamate 5-semialdehyde dehydrogenase (488 aa).

Position 221–226 (221–226) interacts with NAD(+); sequence GSSRTG. Residues Glu244 and Cys278 contribute to the active site.

Belongs to the aldehyde dehydrogenase family. AstD subfamily.

It catalyses the reaction N-succinyl-L-glutamate 5-semialdehyde + NAD(+) + H2O = N-succinyl-L-glutamate + NADH + 2 H(+). Its pathway is amino-acid degradation; L-arginine degradation via AST pathway; L-glutamate and succinate from L-arginine: step 4/5. In terms of biological role, catalyzes the NAD-dependent reduction of succinylglutamate semialdehyde into succinylglutamate. In Pseudomonas fluorescens (strain SBW25), this protein is N-succinylglutamate 5-semialdehyde dehydrogenase.